Reading from the N-terminus, the 190-residue chain is Remorin (190 aa).

Basic and acidic residues predominate over residues 1–12; that stretch reads MAEEQKTSKVDV. Disordered regions lie at residues 1-45 and 50-69; these read MAEE…VESK and VEKP…SADR. A Phosphoserine modification is found at serine 14. Threonine 58 carries the phosphothreonine modification. A coiled-coil region spans residues 92–147; the sequence is EKSKAENRAQKKISDVHAWENSKKAAVEAQLRKIEEKLEKKKAQYGEKMKNKVAAI.

It belongs to the remorin family. As to quaternary structure, may polymerize to form filamentous structures. Expressed in roots, leaves, stems, flowers and siliques, with a maximal expression in apical regions.

Exhibits a non sequence-specific DNA-binding activity. In Arabidopsis thaliana (Mouse-ear cress), this protein is Remorin (DBP).